A 572-amino-acid polypeptide reads, in one-letter code: DNA polymerase (572 aa).

Positions 1–222 (MSRKMFSCDF…LPMDKEIRKA (222 aa)) are 3'-5' exonuclease and strand displacement activities. Positions 56–66 (YFHNLKFDGAF) are interaction with the primer terminal protein. Mg(2+) is bound by residues Asp-142 and Asp-166. The segment at 223-226 (YRGG) is DNA-binding; Involved in the formation of a stable complex between TP and phi29 DNA polymerase. An initiation, polymerization and pyrophosphorolytic activities region spans residues 227-572 (FTWLNDKYKE…VLVDSVFTIK (346 aa)). Asp-246 and Val-247 together coordinate Mg(2+). 5-methyl-UTP is bound by residues Tyr-251, Lys-368, and Lys-380. Positions 453 and 455 each coordinate Mg(2+). Residue Asp-455 coordinates 5-methyl-UTP.

It belongs to the DNA polymerase type-B family. Interacts with the primer terminal protein; this interaction allows the initiation of TP-primed DNA replication at both viral DNA ends. Interacts with DNA. Mg(2+) is required as a cofactor.

The catalysed reaction is DNA(n) + a 2'-deoxyribonucleoside 5'-triphosphate = DNA(n+1) + diphosphate. Its function is as follows. Polymerase responsible for protein-primed viral DNA replication by strand displacement with high processivity and fidelity. To start replication, the DNA polymerase forms a heterodimer with a free primer terminal protein (TP), recognizes the replication origins at both 5' ends of the linear chromosome, and initiates replication using as primer the OH-group of Ser-232 of the TP. This polymerase possesses three enzymatic activities: DNA synthesis (polymerase), primer terminal protein (TP) deoxynucleotidylation, which is the formation of a covalent linkage (phosphoester) between the hydroxyl group of a specific serine residue in TP and 5'-dAMP, a reaction directed by the third T at the 3' end, and 3' to 5' exonuclease activity. Exonuclease activity has a proofreading purpose. Since the polymerase initiates the replication on the third thymine, the TP-dAMP initiation product translocates backwards to recover the template information of the 2 terminal nucleotide (sliding back-mechanism). This chain is DNA polymerase, found in Bacillus phage Nf (Bacteriophage Nf).